We begin with the raw amino-acid sequence, 393 residues long: S-adenosylmethionine synthase 2 (393 aa).

A Mg(2+)-binding site is contributed by glutamate 9. Histidine 15 provides a ligand contact to ATP. Glutamate 43 is a binding site for K(+). 2 residues coordinate L-methionine: glutamate 56 and glutamine 99. Residues 167–169 (DGK), 235–238 (SGRF), aspartate 246, 252–253 (RK), alanine 269, lysine 273, and lysine 277 contribute to the ATP site. Aspartate 246 contacts L-methionine. An L-methionine-binding site is contributed by lysine 277.

It belongs to the AdoMet synthase family. As to quaternary structure, homotetramer. Requires Mn(2+) as cofactor. It depends on Mg(2+) as a cofactor. Co(2+) serves as cofactor. K(+) is required as a cofactor.

Its subcellular location is the cytoplasm. The enzyme catalyses L-methionine + ATP + H2O = S-adenosyl-L-methionine + phosphate + diphosphate. It participates in amino-acid biosynthesis; S-adenosyl-L-methionine biosynthesis; S-adenosyl-L-methionine from L-methionine: step 1/1. Catalyzes the formation of S-adenosylmethionine from methionine and ATP. The reaction comprises two steps that are both catalyzed by the same enzyme: formation of S-adenosylmethionine (AdoMet) and triphosphate, and subsequent hydrolysis of the triphosphate. The protein is S-adenosylmethionine synthase 2 (METK2) of Populus trichocarpa (Western balsam poplar).